The chain runs to 307 residues: Acyl transferase (307 aa).

Catalysis depends on charge relay system residues S116, D213, and H243.

This sequence belongs to the LuxD family.

The protein operates within lipid metabolism; fatty acid reduction for biolumincescence. Functionally, acyl transferase is part of the fatty acid reductase system required for aldehyde biosynthesis; it produces fatty acids for the luminescent reaction. The chain is Acyl transferase from Photorhabdus laumondii subsp. laumondii (strain DSM 15139 / CIP 105565 / TT01) (Photorhabdus luminescens subsp. laumondii).